A 136-amino-acid polypeptide reads, in one-letter code: Histone H3-7 (136 aa).

Positions 1-43 (MARTKQTARKSTGGKAPRKQLATKAARKSAPATGGVKKPHRYR) are disordered. The residue at position 3 (arginine 3) is an Asymmetric dimethylarginine. Citrulline; alternate is present on arginine 3. Threonine 4 bears the Phosphothreonine mark. Lysine 5 is subject to Allysine; alternate. Lysine 5 bears the N6,N6,N6-trimethyllysine; alternate mark. An N6,N6-dimethyllysine; alternate modification is found at lysine 5. Lysine 5 is modified (N6-(2-hydroxyisobutyryl)lysine; alternate). Residue lysine 5 is modified to N6-(beta-hydroxybutyryl)lysine; alternate. Lysine 5 is subject to N6-acetyllysine; alternate. Lysine 5 bears the N6-methyllysine; alternate mark. 5-glutamyl dopamine; alternate is present on glutamine 6. The residue at position 6 (glutamine 6) is a 5-glutamyl serotonin; alternate. Phosphothreonine is present on threonine 7. Position 9 is a citrulline; alternate (arginine 9). Arginine 9 carries the symmetric dimethylarginine modification. N6,N6,N6-trimethyllysine; alternate is present on lysine 10. Lysine 10 carries the N6,N6-dimethyllysine; alternate modification. N6-(2-hydroxyisobutyryl)lysine; alternate is present on lysine 10. At lysine 10 the chain carries N6-(beta-hydroxybutyryl)lysine; alternate. Lysine 10 bears the N6-acetyllysine; alternate mark. Lysine 10 carries the N6-methyllysine; alternate modification. Lysine 10 is subject to N6-lactoyllysine; alternate. Serine 11 carries the post-translational modification ADP-ribosylserine; alternate. Serine 11 is modified (phosphoserine; alternate). Threonine 12 is modified (phosphothreonine). Residue lysine 15 is modified to N6-(2-hydroxyisobutyryl)lysine; alternate. Lysine 15 is modified (N6-(beta-hydroxybutyryl)lysine; alternate). Lysine 15 carries the N6-acetyllysine; alternate modification. Lysine 15 is subject to N6-lactoyllysine; alternate. At lysine 15 the chain carries N6-glutaryllysine; alternate. Lysine 15 carries the N6-succinyllysine; alternate modification. An Asymmetric dimethylarginine modification is found at arginine 18. The residue at position 18 (arginine 18) is a Citrulline; alternate. Lysine 19 and lysine 24 each carry N6-(2-hydroxyisobutyryl)lysine; alternate. Residues lysine 19 and lysine 24 each carry the N6-(beta-hydroxybutyryl)lysine; alternate modification. Lysine 19 and lysine 24 each carry N6-acetyllysine; alternate. An N6-methyllysine; alternate mark is found at lysine 19 and lysine 24. An N6-lactoyllysine; alternate mark is found at lysine 19 and lysine 24. Residues lysine 19 and lysine 24 each carry the N6-glutaryllysine; alternate modification. An N6-butyryllysine; alternate mark is found at lysine 19 and lysine 24. The residue at position 27 (arginine 27) is a Citrulline. At lysine 28 the chain carries N6,N6,N6-trimethyllysine; alternate. Lysine 28 is modified (N6,N6-dimethyllysine; alternate). N6-(2-hydroxyisobutyryl)lysine; alternate is present on lysine 28. Position 28 is an N6-acetyllysine; alternate (lysine 28). Lysine 28 carries the post-translational modification N6-methyllysine; alternate. Residue lysine 28 is modified to N6-lactoyllysine; alternate. Lysine 28 carries the post-translational modification N6-glutaryllysine; alternate. Serine 29 is subject to ADP-ribosylserine; alternate. Serine 29 bears the Phosphoserine; alternate mark. Lysine 37 carries the post-translational modification N6,N6,N6-trimethyllysine; alternate. Lysine 37 is modified (N6,N6-dimethyllysine; alternate). An N6-(2-hydroxyisobutyryl)lysine; alternate modification is found at lysine 37. An N6-acetyllysine; alternate modification is found at lysine 37. Position 37 is an N6-methyllysine; alternate (lysine 37). At lysine 38 the chain carries N6-methyllysine. A Phosphotyrosine modification is found at tyrosine 42. Residue lysine 57 is modified to N6,N6,N6-trimethyllysine; alternate. Lysine 57 carries the N6-(2-hydroxyisobutyryl)lysine; alternate modification. Lysine 57 carries the post-translational modification N6-(beta-hydroxybutyryl)lysine; alternate. At lysine 57 the chain carries N6-acetyllysine; alternate. Lysine 57 carries the N6-lactoyllysine; alternate modification. Lysine 57 carries the post-translational modification N6-glutaryllysine; alternate. N6-succinyllysine; alternate is present on lysine 57. Position 57 is an N6-methyllysine (lysine 57). Position 58 is a phosphoserine (serine 58). Lysine 65 and lysine 80 each carry N6-(2-hydroxyisobutyryl)lysine; alternate. An N6-methyllysine; alternate mark is found at lysine 65 and lysine 80. At lysine 80 the chain carries N6,N6,N6-trimethyllysine; alternate. N6,N6-dimethyllysine; alternate is present on lysine 80. An N6-acetyllysine; alternate modification is found at lysine 80. Lysine 80 bears the N6-lactoyllysine; alternate mark. N6-glutaryllysine; alternate is present on lysine 80. An N6-succinyllysine; alternate modification is found at lysine 80. Threonine 81 bears the Phosphothreonine mark. Serine 87 carries the post-translational modification Phosphoserine. Position 108 is a phosphothreonine (threonine 108). Lysine 116 and lysine 123 each carry N6-acetyllysine; alternate. 2 positions are modified to N6-glutaryllysine; alternate: lysine 116 and lysine 123. Residue lysine 123 is modified to N6-(2-hydroxyisobutyryl)lysine; alternate. At lysine 123 the chain carries N6-methyllysine; alternate. Lysine 123 is modified (N6-succinyllysine; alternate).

Belongs to the histone H3 family. In terms of assembly, the nucleosome is a histone octamer containing two molecules each of H2A, H2B, H3 and H4 assembled in one H3-H4 heterotetramer and two H2A-H2B heterodimers. The octamer wraps approximately 147 bp of DNA. During nucleosome assembly the chaperone ASF1A interacts with the histone H3-H4 heterodimer. In terms of processing, acetylation is generally linked to gene activation. Acetylation on Lys-10 (H3K9ac) impairs methylation at Arg-9 (H3R8me2s). Acetylation on Lys-19 (H3K18ac) and Lys-24 (H3K24ac) favors methylation at Arg-18 (H3R17me). Acetylation at Lys-123 (H3K122ac) by EP300/p300 plays a central role in chromatin structure: localizes at the surface of the histone octamer and stimulates transcription, possibly by promoting nucleosome instability. Citrullination at Arg-9 (H3R8ci) and/or Arg-18 (H3R17ci) by PADI4 impairs methylation and represses transcription. Post-translationally, asymmetric dimethylation at Arg-18 (H3R17me2a) by CARM1 is linked to gene activation. Symmetric dimethylation at Arg-9 (H3R8me2s) by PRMT5 is linked to gene repression. Asymmetric dimethylation at Arg-3 (H3R2me2a) by PRMT6 is linked to gene repression and is mutually exclusive with H3 Lys-5 methylation (H3K4me2 and H3K4me3). H3R2me2a is present at the 3' of genes regardless of their transcription state and is enriched on inactive promoters, while it is absent on active promoters. In terms of processing, methylation at Lys-5 (H3K4me), Lys-37 (H3K36me) and Lys-80 (H3K79me) are linked to gene activation. Methylation at Lys-5 (H3K4me) facilitates subsequent acetylation of H3 and H4. Methylation at Lys-80 (H3K79me) is associated with DNA double-strand break (DSB) responses and is a specific target for TP53BP1. Methylation at Lys-10 (H3K9me) and Lys-28 (H3K27me) are linked to gene repression. Methylation at Lys-10 (H3K9me) is a specific target for HP1 proteins (CBX1, CBX3 and CBX5) and prevents subsequent phosphorylation at Ser-11 (H3S10ph) and acetylation of H3 and H4. Methylation at Lys-5 (H3K4me) and Lys-80 (H3K79me) require preliminary monoubiquitination of H2B at 'Lys-120'. Methylation at Lys-10 (H3K9me) and Lys-28 (H3K27me) are enriched in inactive X chromosome chromatin. Monomethylation at Lys-57 (H3K56me1) by EHMT2/G9A in G1 phase promotes interaction with PCNA and is required for DNA replication. Phosphorylated at Thr-4 (H3T3ph) by HASPIN during prophase and dephosphorylated during anaphase. Phosphorylation at Ser-11 (H3S10ph) by AURKB is crucial for chromosome condensation and cell-cycle progression during mitosis and meiosis. In addition phosphorylation at Ser-11 (H3S10ph) by RPS6KA4 and RPS6KA5 is important during interphase because it enables the transcription of genes following external stimulation, like mitogens, stress, growth factors or UV irradiation and result in the activation of genes, such as c-fos and c-jun. Phosphorylation at Ser-11 (H3S10ph), which is linked to gene activation, prevents methylation at Lys-10 (H3K9me) but facilitates acetylation of H3 and H4. Phosphorylation at Ser-11 (H3S10ph) by AURKB mediates the dissociation of HP1 proteins (CBX1, CBX3 and CBX5) from heterochromatin. Phosphorylation at Ser-11 (H3S10ph) is also an essential regulatory mechanism for neoplastic cell transformation. Phosphorylated at Ser-29 (H3S28ph) by MAP3K20 isoform 1, RPS6KA5 or AURKB during mitosis or upon ultraviolet B irradiation. Phosphorylation at Thr-7 (H3T6ph) by PRKCB is a specific tag for epigenetic transcriptional activation that prevents demethylation of Lys-5 (H3K4me) by LSD1/KDM1A. At centromeres, specifically phosphorylated at Thr-12 (H3T11ph) from prophase to early anaphase, by DAPK3 and PKN1. Phosphorylation at Thr-12 (H3T11ph) by PKN1 or isoform M2 of PKM (PKM2) is a specific tag for epigenetic transcriptional activation that promotes demethylation of Lys-10 (H3K9me) by KDM4C/JMJD2C. Phosphorylation at Tyr-42 (H3Y41ph) by JAK2 promotes exclusion of CBX5 (HP1 alpha) from chromatin. Post-translationally, ubiquitinated. In terms of processing, lysine deamination at Lys-5 (H3K4all) to form allysine is mediated by LOXL2. Allysine formation by LOXL2 only takes place on H3K4me3 and results in gene repression. Butyrylation of histones marks active promoters and competes with histone acetylation. It is present during late spermatogenesis. Post-translationally, succinylation at Lys-80 (H3K79succ) by KAT2A takes place with a maximum frequency around the transcription start sites of genes. It gives a specific tag for epigenetic transcription activation. Desuccinylation at Lys-123 (H3K122succ) by SIRT7 in response to DNA damage promotes chromatin condensation and double-strand breaks (DSBs) repair. In terms of processing, serine ADP-ribosylation constitutes the primary form of ADP-ribosylation of proteins in response to DNA damage. Serine ADP-ribosylation at Ser-11 (H3S10ADPr) is mutually exclusive with phosphorylation at Ser-11 (H3S10ph) and impairs acetylation at Lys-10 (H3K9ac).

Its subcellular location is the nucleus. It is found in the chromosome. In terms of biological role, core component of nucleosome. Nucleosomes wrap and compact DNA into chromatin, limiting DNA accessibility to the cellular machineries which require DNA as a template. Histones thereby play a central role in transcription regulation, DNA repair, DNA replication and chromosomal stability. DNA accessibility is regulated via a complex set of post-translational modifications of histones, also called histone code, and nucleosome remodeling. In Homo sapiens (Human), this protein is Histone H3-7.